The primary structure comprises 458 residues: N-acetylgalactosamine kinase (458 aa).

The alpha-D-galactose site is built by arginine 43, glutamate 49, histidine 50, and aspartate 52. ATP contacts are provided by glycine 143, serine 145, and serine 146. Aspartate 190 provides a ligand contact to alpha-D-galactose. Catalysis depends on aspartate 190, which acts as the Proton acceptor. Residues asparagine 233 and lysine 234 each coordinate ATP.

It belongs to the GHMP kinase family. GalK subfamily. As to quaternary structure, monomer.

It catalyses the reaction N-acetyl-alpha-D-galactosamine + ATP = N-acetyl-alpha-D-galactosamine 1-phosphate + ADP + H(+). Its function is as follows. Acts on GalNAc. Also acts as a galactokinase when galactose is present at high concentrations. The polypeptide is N-acetylgalactosamine kinase (Galk2) (Mus musculus (Mouse)).